Reading from the N-terminus, the 85-residue chain is Sugar transporter SemiSWEET (85 aa).

The PQ-loop domain maps to 2-59; sequence ENLIGYVAAFLTTVSFLPQVLRVVMTKQTRDISRNMYIMFFLGVVLWFVYGILRSDLP. Transmembrane regions (helical) follow at residues 5 to 25, 33 to 53, and 57 to 77; these read IGYVAAFLTTVSFLPQVLRVV, ISRNMYIMFFLGVVLWFVYGI, and DLPIILANVVTLFFVTIILYY.

As to quaternary structure, homodimer.

Its subcellular location is the cell membrane. The homodimer mediates transmembrane sugar transport down a concentration gradient. Transport is probably effected by rocking-type movements, where a cargo-binding cavity opens first on one and then on the other side of the membrane. The polypeptide is Sugar transporter SemiSWEET (Leptospira biflexa serovar Patoc (strain Patoc 1 / ATCC 23582 / Paris)).